Here is a 347-residue protein sequence, read N- to C-terminus: NADH-ubiquinone oxidoreductase chain 2 (347 aa).

The next 9 membrane-spanning stretches (helical) occupy residues 3-23, 25-45, 59-79, 111-131, 149-169, 200-220, 242-262, 274-294, and 325-345; these read PPIFIIIMTTVISGTMMVLIS, HWLLIWIGFEMNMLAIIPILM, YFLTQATASMILMLGIIINLL, FHFWVPEVTQGISLSSGMILL, INPNLLMSMAIMSMLVAGWGG, LMHLNLVMYIMMTLGTFMLFM, LLILMLMLSLGGLPPLSGFIP, NMIIIPTFMAIAALLSLYFYM, and LLPPLIIMSTMLLPMTPMMLI.

This sequence belongs to the complex I subunit 2 family. Core subunit of respiratory chain NADH dehydrogenase (Complex I) which is composed of 45 different subunits. Interacts with TMEM242.

The protein resides in the mitochondrion inner membrane. It carries out the reaction a ubiquinone + NADH + 5 H(+)(in) = a ubiquinol + NAD(+) + 4 H(+)(out). In terms of biological role, core subunit of the mitochondrial membrane respiratory chain NADH dehydrogenase (Complex I) which catalyzes electron transfer from NADH through the respiratory chain, using ubiquinone as an electron acceptor. Essential for the catalytic activity and assembly of complex I. The sequence is that of NADH-ubiquinone oxidoreductase chain 2 from Ailurus fulgens (Himalayan red panda).